Reading from the N-terminus, the 641-residue chain is Forkhead box protein P4 (641 aa).

Disordered regions lie at residues 1–43 (MMVE…NGEL) and 239–264 (SFPTTKVSPPTMHPSLSNGQNTRRES). Composition is skewed to polar residues over residues 8–27 (IRSTPTSQNGVGSLPNQSDS) and 239–259 (SFPTTKVSPPTMHPSLSNGQN). A C2H2-type zinc finger spans residues 278-303 (GECRWPGCEALCEDMGQFIKHLNTEH). The leucine-zipper stretch occupies residues 320–341 (VQQLEIQLAKESERLQAMMTHL). The interval 354-358 (PLNLV) is ctbp1-binding. The fork-head DNA-binding region spans 436 to 526 (RPPFTYASLI…PPKMTGSPTL (91 aa)). Positions 563-641 (SSGSVLHGGH…ESESPMEDLP (79 aa)) are disordered. Polar residues predominate over residues 576 to 599 (TSTGEPGNSNGSSPRLSPQYSQSI). Residues 600–611 (HVKEEPAEDDVR) show a composition bias toward basic and acidic residues. Acidic residues predominate over residues 629-641 (RDLESESPMEDLP).

Dimerization is required for DNA-binding. In terms of tissue distribution, first expressed in the anterior neural field of stage 15 embryos. At stage 18, localized in three domains of the brain (rostral forebrain, midbrain and hindbrain) and in the eye anlage. Cerebral and retinal expression persists at later stages with additional expression in the branchial arches, at the base of the hatching gland, and in the pancreas.

The protein localises to the nucleus. Functionally, transcriptional repressor. The sequence is that of Forkhead box protein P4 from Xenopus laevis (African clawed frog).